Here is a 265-residue protein sequence, read N- to C-terminus: Cytochrome c oxidase subunit 3 (265 aa).

6 consecutive transmembrane segments (helical) span residues 16–36 (PWPFFVAISANGMAVGLILWL), 40–60 (PSFLLMGMSLVCMLLSTFSWW), 83–103 (CVALFILSEVMFFFTFFWTFF), 159–179 (VGPFIGLVVTIVCGTVFFLVQ), 198–218 (VFYLLTGFHGMHVVVGTIWLM), and 241–261 (IWYWHFVDVVWVALWCLVYVW).

It belongs to the cytochrome c oxidase subunit 3 family. Component of the cytochrome c oxidase (complex IV, CIV), a multisubunit enzyme composed of a catalytic core of 3 subunits and several supernumerary subunits. The complex exists as a monomer or a dimer and forms supercomplexes (SCs) in the inner mitochondrial membrane with ubiquinol-cytochrome c oxidoreductase (cytochrome b-c1 complex, complex III, CIII).

It localises to the mitochondrion inner membrane. The catalysed reaction is 4 Fe(II)-[cytochrome c] + O2 + 8 H(+)(in) = 4 Fe(III)-[cytochrome c] + 2 H2O + 4 H(+)(out). Its function is as follows. Component of the cytochrome c oxidase, the last enzyme in the mitochondrial electron transport chain which drives oxidative phosphorylation. The respiratory chain contains 3 multisubunit complexes succinate dehydrogenase (complex II, CII), ubiquinol-cytochrome c oxidoreductase (cytochrome b-c1 complex, complex III, CIII) and cytochrome c oxidase (complex IV, CIV), that cooperate to transfer electrons derived from NADH and succinate to molecular oxygen, creating an electrochemical gradient over the inner membrane that drives transmembrane transport and the ATP synthase. Cytochrome c oxidase is the component of the respiratory chain that catalyzes the reduction of oxygen to water. Electrons originating from reduced cytochrome c in the intermembrane space (IMS) are transferred via the dinuclear copper A center (CU(A)) of subunit 2 and heme A of subunit 1 to the active site in subunit 1, a binuclear center (BNC) formed by heme A3 and copper B (CU(B)). The BNC reduces molecular oxygen to 2 water molecules using 4 electrons from cytochrome c in the IMS and 4 protons from the mitochondrial matrix. The protein is Cytochrome c oxidase subunit 3 (COIII) of Mytilus edulis (Blue mussel).